The sequence spans 399 residues: Elongation factor Tu (399 aa).

Residues 10–204 form the tr-type G domain; that stretch reads KPHVNIGTIG…AVDASIPEPE (195 aa). The interval 19-26 is G1; it reads GHVDHGKT. A GTP-binding site is contributed by 19–26; sequence GHVDHGKT. Thr26 is a binding site for Mg(2+). The interval 60 to 64 is G2; it reads GITIN. The tract at residues 81 to 84 is G3; the sequence is DCPG. GTP-binding positions include 81 to 85 and 136 to 139; these read DCPGH and NKCD. The interval 136-139 is G4; that stretch reads NKCD. The segment at 174–176 is G5; the sequence is SGL.

Belongs to the TRAFAC class translation factor GTPase superfamily. Classic translation factor GTPase family. EF-Tu/EF-1A subfamily. Monomer.

The protein localises to the cytoplasm. It catalyses the reaction GTP + H2O = GDP + phosphate + H(+). Functionally, GTP hydrolase that promotes the GTP-dependent binding of aminoacyl-tRNA to the A-site of ribosomes during protein biosynthesis. This is Elongation factor Tu from Prochlorococcus marinus subsp. pastoris (strain CCMP1986 / NIES-2087 / MED4).